Here is a 283-residue protein sequence, read N- to C-terminus: Pantothenate synthetase (283 aa).

30–37 (MGYLHEGH) is a binding site for ATP. Catalysis depends on His-37, which acts as the Proton donor. (R)-pantoate is bound at residue Gln-61. Gln-61 lines the beta-alanine pocket. 147–150 (GQKD) lines the ATP pocket. Gln-153 contributes to the (R)-pantoate binding site. ATP is bound by residues Val-176 and 184 to 187 (MSSR).

It belongs to the pantothenate synthetase family. As to quaternary structure, homodimer.

Its subcellular location is the cytoplasm. It carries out the reaction (R)-pantoate + beta-alanine + ATP = (R)-pantothenate + AMP + diphosphate + H(+). Its pathway is cofactor biosynthesis; (R)-pantothenate biosynthesis; (R)-pantothenate from (R)-pantoate and beta-alanine: step 1/1. Functionally, catalyzes the condensation of pantoate with beta-alanine in an ATP-dependent reaction via a pantoyl-adenylate intermediate. The polypeptide is Pantothenate synthetase (Thermoanaerobacter sp. (strain X514)).